A 1639-amino-acid chain; its full sequence is RIMS-binding protein 3A (1639 aa).

Disordered stretches follow at residues 1-22 (MAKDSPSPLGASPKKPGCSSPA), 215-240 (GSPDPQAVHSLEEPLPQTSSGSCHAP), and 295-364 (SLDS…LTPS). Positions 21-143 (PAAAVLENQR…ELQRQLAEEL (123 aa)) form a coiled coil. A compositionally biased stretch (pro residues) spans 326–339 (SPPPSPLPPPPPPS). Coiled coils occupy residues 409-442 (QADEKVKRLKVKRAELTGLARRLADRARKLQETN) and 480-619 (LAKD…AEEN). The interval 697–811 (CRPGHPPEQP…DRDTASEVDD (115 aa)) is disordered. Composition is skewed to polar residues over residues 707-718 (WETSQMPESQVK) and 761-775 (SVPQVSETVPASQPL). Over residues 776–790 (SKKTSSQSNSSSEGS) the composition is skewed to low complexity. Residues 832-899 (PKLKIFMAQY…PSNFVEQIPD (68 aa)) enclose the SH3 1 domain. Fibronectin type-III domains follow at residues 995 to 1083 (APMQ…TLLA) and 1088 to 1184 (PPLD…IPED). 2 disordered regions span residues 1251-1273 (PRRQSPVSNLGSEGECPSSGAGS) and 1292-1330 (QKSPQNHRPPSVSDQPGEKENCSQHMGTSKSPAPGFIHL). A compositionally biased stretch (polar residues) spans 1293–1305 (KSPQNHRPPSVSD). SH3 domains follow at residues 1452–1520 (TPAR…EMEV) and 1569–1636 (WTPK…HMSL).

This sequence belongs to the RIMBP family. Interacts with LRGUK (via guanylate kinase-like domain). Interacts (via C-terminus) with HOOK1 (via coiled-coil region).

The protein resides in the cytoplasm. Its subcellular location is the cytoskeleton. Functionally, probable component of the manchette, a microtubule-based structure which plays a key role in sperm head morphogenesis during late stages of sperm development. In Homo sapiens (Human), this protein is RIMS-binding protein 3A (RIMBP3).